The chain runs to 273 residues: 3-methyl-2-oxobutanoate hydroxymethyltransferase (273 aa).

Mg(2+)-binding residues include Asp53 and Asp92. 3-methyl-2-oxobutanoate is bound by residues Asp53–Ser54, Asp92, and Lys122. Residue Glu124 coordinates Mg(2+). Catalysis depends on Glu191, which acts as the Proton acceptor.

The protein belongs to the PanB family. As to quaternary structure, homodecamer; pentamer of dimers. Mg(2+) is required as a cofactor.

The protein resides in the cytoplasm. The enzyme catalyses 3-methyl-2-oxobutanoate + (6R)-5,10-methylene-5,6,7,8-tetrahydrofolate + H2O = 2-dehydropantoate + (6S)-5,6,7,8-tetrahydrofolate. Its pathway is cofactor biosynthesis; (R)-pantothenate biosynthesis; (R)-pantoate from 3-methyl-2-oxobutanoate: step 1/2. Its function is as follows. Catalyzes the reversible reaction in which hydroxymethyl group from 5,10-methylenetetrahydrofolate is transferred onto alpha-ketoisovalerate to form ketopantoate. In Parabacteroides distasonis (strain ATCC 8503 / DSM 20701 / CIP 104284 / JCM 5825 / NCTC 11152), this protein is 3-methyl-2-oxobutanoate hydroxymethyltransferase.